The primary structure comprises 335 residues: Galactosylgalactosylxylosylprotein 3-beta-glucuronosyltransferase 3 (335 aa).

The Cytoplasmic portion of the chain corresponds to 1–7 (MKLKLKN). The helical; Signal-anchor for type II membrane protein transmembrane segment at 8–28 (VFLAYFLVSIAGLLYALVQLG) threads the bilayer. Topologically, residues 29 to 335 (QPCDCLPPLR…GRGSDPAIEV (307 aa)) are lumenal. Residues 82–84 (PTY), D113, R156, R161, and 194–196 (DDD) each bind UDP-alpha-D-glucuronate. D196 lines the Mn(2+) pocket. An interaction with galactose moiety of substrate glycoprotein region spans residues 243 to 252 (WEPSRPFPVD). Residue E281 is the Proton donor/acceptor of the active site. An N-linked (GlcNAc...) asparagine glycan is attached at N300. 308-310 (HTR) contributes to the UDP-alpha-D-glucuronate binding site. Residues 312–322 (EKPKMKQEEQL) show a composition bias toward basic and acidic residues. Residues 312-335 (EKPKMKQEEQLQRQGRGSDPAIEV) form a disordered region.

This sequence belongs to the glycosyltransferase 43 family. Homodimer; disulfide-linked. Interacts with PXYLP1; the interaction increases the 2-phosphoxylose phosphatase activity of PXYLP1 during completion of linkage region formation in a B3GAT3-mediated manner. Requires Mn(2+) as cofactor. In terms of processing, N-glycosylated. Ubiquitous (but weakly expressed in all tissues examined).

It is found in the golgi apparatus membrane. Its subcellular location is the golgi apparatus. It localises to the cis-Golgi network. The catalysed reaction is 3-O-(beta-D-galactosyl-(1-&gt;3)-beta-D-galactosyl-(1-&gt;4)-beta-D-xylosyl)-L-seryl-[protein] + UDP-alpha-D-glucuronate = 3-O-(beta-D-GlcA-(1-&gt;3)-beta-D-Gal-(1-&gt;3)-beta-D-Gal-(1-&gt;4)-beta-D-Xyl)-L-seryl-[protein] + UDP + H(+). Its pathway is protein modification; protein glycosylation. Inhibited by EDTA. Its function is as follows. Glycosaminoglycans biosynthesis. Involved in forming the linkage tetrasaccharide present in heparan sulfate and chondroitin sulfate. Transfers a glucuronic acid moiety from the uridine diphosphate-glucuronic acid (UDP-GlcUA) to the common linkage region trisaccharide Gal-beta-1,3-Gal-beta-1,4-Xyl covalently bound to a Ser residue at the glycosaminylglycan attachment site of proteoglycans. Can also play a role in the biosynthesis of l2/HNK-1 carbohydrate epitope on glycoproteins. Shows strict specificity for Gal-beta-1,3-Gal-beta-1,4-Xyl, exhibiting negligible incorporation into other galactoside substrates including Galbeta1-3Gal beta1-O-benzyl, Galbeta1-4GlcNAc and Galbeta1-4Glc. Stimulates 2-phosphoxylose phosphatase activity of PXYLP1 in presence of uridine diphosphate-glucuronic acid (UDP-GlcUA) during completion of linkage region formation. This chain is Galactosylgalactosylxylosylprotein 3-beta-glucuronosyltransferase 3 (B3GAT3), found in Homo sapiens (Human).